A 445-amino-acid polypeptide reads, in one-letter code: Mitochondrial-processing peptidase subunit alpha-2 (445 aa).

The N-terminal 13 residues, Met1–Ser13, are a transit peptide targeting the mitochondrion.

Belongs to the peptidase M16 family. Heterodimer of alpha and beta subunits, forming the mitochondrial processing protease (MPP) in which subunit alpha is involved in substrate recognition and binding and subunit beta is the catalytic subunit.

The protein localises to the mitochondrion matrix. Functionally, substrate recognition and binding subunit of the essential mitochondrial processing protease (MPP), which cleaves the mitochondrial sequence off newly imported precursors proteins. In Dictyostelium discoideum (Social amoeba), this protein is Mitochondrial-processing peptidase subunit alpha-2 (mppA2).